We begin with the raw amino-acid sequence, 223 residues long: Holliday junction branch migration complex subunit RuvA (223 aa).

The segment at 1-64 (MIGKLTGRLD…EDLLQLFGFL (64 aa)) is domain I. Residues 65 to 143 (SPYEKEWHRL…AVMAMGGTLD (79 aa)) are domain II. Positions 144 to 171 (DAMDDVVDDMPGESAAPAPAPQPRAPKR) are flexible linker. The tract at residues 148-177 (DVVDDMPGESAAPAPAPQPRAPKRPASNAQ) is disordered. A domain III region spans residues 172–223 (PASNAQAEALSALQNLGYGPSDAAQAVAQAAESASNTPELIRAALRLLAPKE).

Belongs to the RuvA family. In terms of assembly, homotetramer. Forms an RuvA(8)-RuvB(12)-Holliday junction (HJ) complex. HJ DNA is sandwiched between 2 RuvA tetramers; dsDNA enters through RuvA and exits via RuvB. An RuvB hexamer assembles on each DNA strand where it exits the tetramer. Each RuvB hexamer is contacted by two RuvA subunits (via domain III) on 2 adjacent RuvB subunits; this complex drives branch migration. In the full resolvosome a probable DNA-RuvA(4)-RuvB(12)-RuvC(2) complex forms which resolves the HJ.

The protein resides in the cytoplasm. In terms of biological role, the RuvA-RuvB-RuvC complex processes Holliday junction (HJ) DNA during genetic recombination and DNA repair, while the RuvA-RuvB complex plays an important role in the rescue of blocked DNA replication forks via replication fork reversal (RFR). RuvA specifically binds to HJ cruciform DNA, conferring on it an open structure. The RuvB hexamer acts as an ATP-dependent pump, pulling dsDNA into and through the RuvAB complex. HJ branch migration allows RuvC to scan DNA until it finds its consensus sequence, where it cleaves and resolves the cruciform DNA. The sequence is that of Holliday junction branch migration complex subunit RuvA from Jannaschia sp. (strain CCS1).